We begin with the raw amino-acid sequence, 186 residues long: ATP synthase subunit delta (186 aa).

The protein belongs to the ATPase delta chain family. In terms of assembly, F-type ATPases have 2 components, F(1) - the catalytic core - and F(0) - the membrane proton channel. F(1) has five subunits: alpha(3), beta(3), gamma(1), delta(1), epsilon(1). F(0) has three main subunits: a(1), b(2) and c(10-14). The alpha and beta chains form an alternating ring which encloses part of the gamma chain. F(1) is attached to F(0) by a central stalk formed by the gamma and epsilon chains, while a peripheral stalk is formed by the delta and b chains.

The protein localises to the cell membrane. Its function is as follows. F(1)F(0) ATP synthase produces ATP from ADP in the presence of a proton or sodium gradient. F-type ATPases consist of two structural domains, F(1) containing the extramembraneous catalytic core and F(0) containing the membrane proton channel, linked together by a central stalk and a peripheral stalk. During catalysis, ATP synthesis in the catalytic domain of F(1) is coupled via a rotary mechanism of the central stalk subunits to proton translocation. Functionally, this protein is part of the stalk that links CF(0) to CF(1). It either transmits conformational changes from CF(0) to CF(1) or is implicated in proton conduction. The sequence is that of ATP synthase subunit delta from Symbiobacterium thermophilum (strain DSM 24528 / JCM 14929 / IAM 14863 / T).